The chain runs to 291 residues: Protease HtpX (291 aa).

A run of 2 helical transmembrane segments spans residues 4-24 (IALF…VLNI) and 36-56 (LSGL…ISLM). His-143 lines the Zn(2+) pocket. Residue Glu-144 is part of the active site. His-147 contributes to the Zn(2+) binding site. The next 2 membrane-spanning stretches (helical) occupy residues 151-171 (GDMI…IFLS) and 199-219 (FIVS…LTMW). Glu-225 serves as a coordination point for Zn(2+).

It belongs to the peptidase M48B family. Zn(2+) is required as a cofactor.

Its subcellular location is the cell inner membrane. The sequence is that of Protease HtpX from Aliivibrio fischeri (strain ATCC 700601 / ES114) (Vibrio fischeri).